The primary structure comprises 456 residues: Major facilitator superfamily domain-containing protein 10 (456 aa).

11 helical membrane passes run 25-45, 87-107, 125-145, 149-169, 179-199, 204-224, 278-298, 311-328, 343-363, 365-385, and 422-442; these read VVAV…LLLP, VLFG…SAPL, LAGV…AAFL, VIGG…ADLG, AVIG…GAFL, VPWL…CFLP, LVYF…SFLV, KMFF…GAYA, AILL…LPIL, LGLL…SSVV, and LAGA…PFSI.

This sequence belongs to the major facilitator superfamily.

It is found in the nucleus inner membrane. The protein resides in the cell membrane. Functionally, probable organic anion transporter which may serve as a transporter for some non-steroidal anti-inflammatory drugs (NSAIDs) as well as other organic anions across the luminal membranes of renal proximal tubules at the final excretion step into the urine. This Bos taurus (Bovine) protein is Major facilitator superfamily domain-containing protein 10 (MFSD10).